We begin with the raw amino-acid sequence, 333 residues long: Methylosome protein WDR77 (333 aa).

WD repeat units follow at residues Cys-16–Asn-59, Gln-68–Val-106, Glu-113–Ser-152, Ala-155–Arg-195, Cys-199–Thr-240, Val-243–Asp-283, and Ser-285–Ala-328.

Heterotetramer; dimer of heterodimer with prmt5. Interacts with histone h2a and h4 and with nucleoplasmin. In terms of tissue distribution, detected in egg (at protein level).

It is found in the cytoplasm. It localises to the nucleus. Functionally, non-catalytic component of the 20S prmt5-containing methyltransferase complex, which modifies specific arginines to dimethylarginines in several spliceosomal Sm proteins and histones. Required for normal prmt5 methyltransferase activity. The chain is Methylosome protein WDR77 from Xenopus laevis (African clawed frog).